The primary structure comprises 151 residues: uncharacterized protein (151 aa).

The region spanning 2–133 (KTLIVEDNPK…VFVEAVHYSQ (132 aa)) is the Response regulatory domain. At Asp53 the chain carries 4-aspartylphosphate.

This is an uncharacterized protein from Sinorhizobium fredii (strain NBRC 101917 / NGR234).